The chain runs to 305 residues: Sulfate adenylyltransferase subunit 2 (305 aa).

The protein belongs to the PAPS reductase family. CysD subfamily. As to quaternary structure, heterodimer composed of CysD, the smaller subunit, and CysN.

It carries out the reaction sulfate + ATP + H(+) = adenosine 5'-phosphosulfate + diphosphate. The protein operates within sulfur metabolism; hydrogen sulfide biosynthesis; sulfite from sulfate: step 1/3. In terms of biological role, with CysN forms the ATP sulfurylase (ATPS) that catalyzes the adenylation of sulfate producing adenosine 5'-phosphosulfate (APS) and diphosphate, the first enzymatic step in sulfur assimilation pathway. APS synthesis involves the formation of a high-energy phosphoric-sulfuric acid anhydride bond driven by GTP hydrolysis by CysN coupled to ATP hydrolysis by CysD. The sequence is that of Sulfate adenylyltransferase subunit 2 from Pseudomonas savastanoi pv. phaseolicola (strain 1448A / Race 6) (Pseudomonas syringae pv. phaseolicola (strain 1448A / Race 6)).